Reading from the N-terminus, the 910-residue chain is Valine--tRNA ligase (910 aa).

Residues 45–55 carry the 'HIGH' region motif; the sequence is PNVTGSLHMGH. The short motif at 554–558 is the 'KMSKS' region element; that stretch reads KMSKS. K557 contacts ATP. Residues 842-910 are a coiled coil; sequence DLQAEAARLA…TAESRIRDAS (69 aa).

The protein belongs to the class-I aminoacyl-tRNA synthetase family. ValS type 1 subfamily. Monomer.

It localises to the cytoplasm. It catalyses the reaction tRNA(Val) + L-valine + ATP = L-valyl-tRNA(Val) + AMP + diphosphate. Catalyzes the attachment of valine to tRNA(Val). As ValRS can inadvertently accommodate and process structurally similar amino acids such as threonine, to avoid such errors, it has a 'posttransfer' editing activity that hydrolyzes mischarged Thr-tRNA(Val) in a tRNA-dependent manner. The sequence is that of Valine--tRNA ligase from Brucella suis biovar 1 (strain 1330).